The sequence spans 362 residues: Anthranilate phosphoribosyltransferase (362 aa).

5-phospho-alpha-D-ribose 1-diphosphate contacts are provided by residues Gly-96, 99–100 (GD), Thr-104, 106–109 (NIST), 124–132 (KHGNRAASS), and Gly-136. Residue Gly-96 participates in anthranilate binding. Ser-108 contacts Mg(2+). Asn-127 contacts anthranilate. An anthranilate-binding site is contributed by Arg-182. Residues Asp-240 and Glu-241 each coordinate Mg(2+).

The protein belongs to the anthranilate phosphoribosyltransferase family. In terms of assembly, homodimer. The cofactor is Mg(2+).

It catalyses the reaction N-(5-phospho-beta-D-ribosyl)anthranilate + diphosphate = 5-phospho-alpha-D-ribose 1-diphosphate + anthranilate. Its pathway is amino-acid biosynthesis; L-tryptophan biosynthesis; L-tryptophan from chorismate: step 2/5. Catalyzes the transfer of the phosphoribosyl group of 5-phosphorylribose-1-pyrophosphate (PRPP) to anthranilate to yield N-(5'-phosphoribosyl)-anthranilate (PRA). This is Anthranilate phosphoribosyltransferase from Rhodococcus opacus (strain B4).